The chain runs to 342 residues: MSTLLLQNLLENGTEFYFFIFVLAIVLLIILSVIGKFISLWFQAFVSGTPIPLFNIIGMSLRKIPPREIVNARINLYKAGLKDIHVGDLETHYLAGGHVPNVVEALIAADKANIPLDWRRATAIDLAGRDIKAAVQTSVNPRVIDCPNHGGYITGVAKDGIQLNCRARVTVRTNIAQLVGGATEETIIARVGEGIVSAIGGSDTHKQVLESPQKISKLVLEKGLDSSTAFLILSIDIVEINLGENIGAKLRTDQAESDIRIAKAEAEKRRTMAVAQEQENLAKVRDMEAKLVEAQAAVPLAMAEAFRSGKLGIMDYQRIQNIQSDTDMRNALAKPDSDKKQN.

2 helical membrane passes run Phe-18–Ile-38 and Ser-39–Met-59.

This sequence belongs to the flotillin-like FloA family. As to quaternary structure, homooligomerizes.

It is found in the cell membrane. The protein localises to the membrane raft. Functionally, found in functional membrane microdomains (FMM) that may be equivalent to eukaryotic membrane rafts. FMMs are highly dynamic and increase in number as cells age. Flotillins are thought to be important factors in membrane fluidity. The protein is Flotillin-like protein FloA of Protochlamydia amoebophila (strain UWE25).